Consider the following 180-residue polypeptide: Large ribosomal subunit protein uL6 (180 aa).

This sequence belongs to the universal ribosomal protein uL6 family. Part of the 50S ribosomal subunit.

In terms of biological role, this protein binds to the 23S rRNA, and is important in its secondary structure. It is located near the subunit interface in the base of the L7/L12 stalk, and near the tRNA binding site of the peptidyltransferase center. The sequence is that of Large ribosomal subunit protein uL6 from Mycoplasma capricolum subsp. capricolum (strain California kid / ATCC 27343 / NCTC 10154).